The primary structure comprises 278 residues: HTH-type transcriptional activator RhaS (278 aa).

Residues 174 to 272 (NQLMAWLEDH…NWSPRDIRQG (99 aa)) form the HTH araC/xylS-type domain. 2 consecutive DNA-binding regions (H-T-H motif) follow at residues 191–212 (EAVAEQFSLSLRTLHRQLKQHT) and 239–262 (VTEIAYRCGFGDSNHFSTLFRREF).

As to quaternary structure, binds DNA as a dimer.

The protein resides in the cytoplasm. Its function is as follows. Activates expression of the rhaBAD and rhaT operons. This chain is HTH-type transcriptional activator RhaS, found in Salmonella enteritidis PT4 (strain P125109).